A 488-amino-acid polypeptide reads, in one-letter code: Malonate-semialdehyde dehydrogenase 1 (488 aa).

The NAD(+) site is built by phenylalanine 156, lysine 180, glutamate 183, arginine 184, serine 233, and serine 255. Residue cysteine 288 is the Nucleophile of the active site. Residue glutamate 387 participates in NAD(+) binding.

Belongs to the aldehyde dehydrogenase family. IolA subfamily. In terms of assembly, homotetramer.

It catalyses the reaction 3-oxopropanoate + NAD(+) + CoA + H2O = hydrogencarbonate + acetyl-CoA + NADH + H(+). The catalysed reaction is 2-methyl-3-oxopropanoate + NAD(+) + CoA + H2O = propanoyl-CoA + hydrogencarbonate + NADH + H(+). The protein operates within polyol metabolism; myo-inositol degradation into acetyl-CoA; acetyl-CoA from myo-inositol: step 7/7. Its function is as follows. Catalyzes the oxidation of malonate semialdehyde (MSA) and methylmalonate semialdehyde (MMSA) into acetyl-CoA and propanoyl-CoA, respectively. Is involved in a myo-inositol catabolic pathway. Bicarbonate, and not CO2, is the end-product of the enzymatic reaction. The protein is Malonate-semialdehyde dehydrogenase 1 of Geobacillus kaustophilus (strain HTA426).